The primary structure comprises 349 residues: MTFAKGILAALALAAAVGQASATELEHWPAPAARQLNALIEANANKGAYAVFDMDNTSYRYDLEESLLPYLEMKGVLTRDRLDPSLKLIPFKDQAGHKESLFSYYYRLCEIDDMVCYPWVAQVFSGFTLRELKGYVDELMAYGKPIPATYYDGDKLATLDVEPPRVFSGQRELYNKLMENGIEVYVISAAHEELVRMVAADPRYGYNAKPENVIGVTTLLKNRKTGELTTARKQIAEGKYDPKANLDLEVTPYLWTPATWMAGKQAAILTYIDRWKRPILVAGDTPDSDGYMLFNGTAENGVHLWVNRKAKYMEQINGMIKQHSAAQAKAGLPVTADRNWVIVTPEQIQ.

The first 22 residues, 1 to 22 (MTFAKGILAALALAAAVGQASA), serve as a signal peptide directing secretion. The active-site Nucleophile is aspartate 53. Positions 53 and 55 each coordinate Mg(2+). Aspartate 55 (proton donor) is an active-site residue. A disulfide bridge connects residues cysteine 109 and cysteine 116. Residue aspartate 284 participates in Mg(2+) binding.

This sequence belongs to the HAD-like hydrolase superfamily. As to quaternary structure, monomer. Homodimer. Homotetramer. Requires Mg(2+) as cofactor.

The protein localises to the periplasm. It catalyses the reaction phosphocholine + H2O = choline + phosphate. The catalysed reaction is phosphoethanolamine + H2O = ethanolamine + phosphate. With respect to regulation, activity is inhibited by high concentrations of phosphorylcholine, phosphorylethanolamine, choline or betaine. Displays different properties depending on the substrate utilized, the pH conditions as well as the presence or absence of metal ions. At pH 5, activity is inhibited by Al(3+) ions. At pH 7.4, the enzyme cannot catalyze the hydrolysis of pNPP, phosphorylethanolamine is a poor substrate in either the presence or absence of divalent cations, and activity measured with phosphorylcholine is independent of divalent cations or is not inhibited by Al(3+) ions. Mg(2+) produces identical activation at pH 5.0 and 7.4, but Zn(2+) is an activator at pH 5.0 and becomes an inhibitor at pH 7.4. This inhibition at pH 7.4 may be due to a transition from octahedral to tetrahedral coordination geometry, which is produced by hydrolysis of the Zn-hexacoordinated complex. Functionally, catalyzes the hydrolysis of phosphorylcholine (PCho) to produce choline and inorganic phosphate. Can also hydrolyze phosphorylethanolamine and the nonphysiological substrate p-nitrophenylphosphate (pNPP). Shows higher affinity and catalytic efficiency with phosphorylcholine as substrate. Its function is as follows. Is probably involved in virulence. The bacteria may break down various host compounds or host cell membranes through the coordinated action of phospholipase C and phosphocholine phosphatase. The final consequence of the action of these enzymes is an increase of the free choline concentration, which may promote the pathogenicity of P.aeruginosa. The chain is Phosphorylcholine phosphatase from Pseudomonas aeruginosa (strain ATCC 15692 / DSM 22644 / CIP 104116 / JCM 14847 / LMG 12228 / 1C / PRS 101 / PAO1).